The primary structure comprises 349 residues: tRNA pseudouridine synthase D (349 aa).

Substrate is bound at residue Phe-26. Asp-79 functions as the Nucleophile in the catalytic mechanism. Asn-128 lines the substrate pocket. The TRUD domain occupies Gly-154 to Leu-302. Phe-328 contacts substrate.

This sequence belongs to the pseudouridine synthase TruD family.

The enzyme catalyses uridine(13) in tRNA = pseudouridine(13) in tRNA. Responsible for synthesis of pseudouridine from uracil-13 in transfer RNAs. In Yersinia enterocolitica serotype O:8 / biotype 1B (strain NCTC 13174 / 8081), this protein is tRNA pseudouridine synthase D.